The chain runs to 232 residues: uncharacterized protein (232 aa).

A helical transmembrane segment spans residues 10 to 32 (GLTIYLYPVIAWIILVTKIESGL).

It localises to the membrane. This is an uncharacterized protein from Archaeoglobus fulgidus (strain ATCC 49558 / DSM 4304 / JCM 9628 / NBRC 100126 / VC-16).